A 49-amino-acid polypeptide reads, in one-letter code: Large ribosomal subunit protein bL33 (49 aa).

The protein belongs to the bacterial ribosomal protein bL33 family.

In Clostridium beijerinckii (strain ATCC 51743 / NCIMB 8052) (Clostridium acetobutylicum), this protein is Large ribosomal subunit protein bL33.